The sequence spans 216 residues: GTP cyclohydrolase 1 (216 aa).

Residues cysteine 108, histidine 111, and cysteine 179 each coordinate Zn(2+).

This sequence belongs to the GTP cyclohydrolase I family. As to quaternary structure, toroid-shaped homodecamer, composed of two pentamers of five dimers.

It carries out the reaction GTP + H2O = 7,8-dihydroneopterin 3'-triphosphate + formate + H(+). Its pathway is cofactor biosynthesis; 7,8-dihydroneopterin triphosphate biosynthesis; 7,8-dihydroneopterin triphosphate from GTP: step 1/1. This Shewanella amazonensis (strain ATCC BAA-1098 / SB2B) protein is GTP cyclohydrolase 1.